The chain runs to 478 residues: Glycogen synthase (478 aa).

Residue K15 participates in ADP-alpha-D-glucose binding.

The protein belongs to the glycosyltransferase 1 family. Bacterial/plant glycogen synthase subfamily.

The enzyme catalyses [(1-&gt;4)-alpha-D-glucosyl](n) + ADP-alpha-D-glucose = [(1-&gt;4)-alpha-D-glucosyl](n+1) + ADP + H(+). Its pathway is glycan biosynthesis; glycogen biosynthesis. Its function is as follows. Synthesizes alpha-1,4-glucan chains using ADP-glucose. The chain is Glycogen synthase from Clostridium botulinum (strain Alaska E43 / Type E3).